We begin with the raw amino-acid sequence, 308 residues long: tRNA dimethylallyltransferase (308 aa).

11-18 (GPTGIGKT) contacts ATP. Substrate is bound at residue 13-18 (TGIGKT). Positions 36 to 39 (DSMQ) are interaction with substrate tRNA.

The protein belongs to the IPP transferase family. Monomer. It depends on Mg(2+) as a cofactor.

It carries out the reaction adenosine(37) in tRNA + dimethylallyl diphosphate = N(6)-dimethylallyladenosine(37) in tRNA + diphosphate. Its function is as follows. Catalyzes the transfer of a dimethylallyl group onto the adenine at position 37 in tRNAs that read codons beginning with uridine, leading to the formation of N6-(dimethylallyl)adenosine (i(6)A). The sequence is that of tRNA dimethylallyltransferase from Lactobacillus gasseri (strain ATCC 33323 / DSM 20243 / BCRC 14619 / CIP 102991 / JCM 1131 / KCTC 3163 / NCIMB 11718 / NCTC 13722 / AM63).